Here is a 521-residue protein sequence, read N- to C-terminus: uncharacterized protein (521 aa).

Residues 14-41 (QFQQMQHQMQQQQQQQMQQQQQQQQQQQ) adopt a coiled-coil conformation. Composition is skewed to low complexity over residues 238–266 (LSGS…TSSS), 275–353 (SSTS…NNNN), and 423–482 (PRLS…PNNP). 2 disordered regions span residues 238-357 (LSGS…ISGF) and 413-491 (TAVA…SNNG).

This is an uncharacterized protein from Dictyostelium discoideum (Social amoeba).